Here is a 2179-residue protein sequence, read N- to C-terminus: MAFPYIWALLPLICSASGLSLPNMTSTDAVVAGGGILPILVAGNPGNLGSSNMSLSGGGGLAGSSTGGQSLPDTGGGNSAGGSPAGGSSGTGGGGSNSGISGNNSAMIQGQKSNQYEKCAGPGDPGPCKQYIYKWRYEPTTNECTNFIWGGCEGNPQNRFGTEAECLFHCIGGPHTLPPFLQSTTREPSTTESSMLLGLPYTQSPAQSPDGMGGAEGGDGTTPVPIEQRGPELTFAETGQGKTFIFAKNNTFIQMDGDIIQTFQLRLCREISFQFRTRLPHGLLVYHNVKNPDRINLDPYALYVIVEKGQLKVVHVFGKHSTSVTVGESLNRDEWHSVMVRIDVHGARLIARVDNSQEEVYLKGLNHEYNYGVSTNLPSVVLVGGLSSEEKLHGVKYITESFVGCIRNVVLSSGKAASDLLPIAPLVATKHENVNEGCSDMCESRHNLCFVGSRCINHYGGISCDCFGTHYEGEHCDIYTATIITLRGASYVSYRIYDWKDRVHSSTRRISLMFRTNFDDSALFYASGESLKHQYIAASIKNQSVHVEMDFGDNVMSTVLTDDLTRGYWHNLTILHEQRTVSIILDQQQKVLELPATASGNMLFDPEIYFGGGPELHKKKGLASHNNFVGSLKYVYYNDISILYELQRGNPKVHYHGVLEAEFVENEVNVIPITYPFATSHIWWPINHAEEFNIKFDFRSSRPGAVLAYSDVTTSAGNGFWEIRLTSDKLSFDLVPDVNNNVTHSTTIKINRATSWHSVELDYKLGEIRFTVDYRHTLSQMYGLTFNIGDKLIIGSSLKSAAMGLVGCIRDIEINGHLIEPRHVVKTERVVGEVALDNCNYIDPCKRPNTCEHGGKCFVKDDRVTCDCKHTGYIGKNCHFTKYRKTCEELALLGFTKSDVYLIDIDGNGVFPPAHVKCDFQSLENATKTIVEHNLPSQVDVRSARESDFSFNIRYREFSPHMLQELISHSLYCTQYIKYDCYRAQLELHSATWFTSSAKNLTVDFLGNVKRGACPCSVNKTCVDPNQSCNCDVKENKWNSDEGYYQDPQSLGITNMYFLQQKDMDDEAQGRITLGPLECVETNTQKYVVTFTTSQSYIEVPGWRKGDIAFSFRTTGEKAILLFQPPIRPHYPSFMVALTGDDQLTFTFTLSTGTTRELVINSHRRLNGGEWHKIWIDYNQYHVRFMINTDYQMLDLLPEEEFGPFEGSMYIGGATFDLLKKLSVKAGLIGCFRGLVVNGEILDIYSYMSVHLSEIIKDCKPSCVPSPCRNGAQCKELWSSFKCVCNNPWAHIGEFCETNINEKALTFINRESFLMRNYLSVGATPVILMHGINGERDVLKGILNQDLLINLRTYDTNALVLYANDHYNNFVHLYISLNREIVFLYNYGDEIVNLTLLDDTLMASLKSIQVAIVRGEQETRMHVNEHSVSIDRGTLLLDEYANKPWSNPEKEVLSPHRPPAPPTEYFQFHVGGYDPANLLRPNVDAPALEGYIGCVRGLKIGAQLIDLADINERNIAPTQEGVLPNCQIKCDAEPCKNGGTCQEHFAEQLSTCDCEHTSFLGEFCSEEKGADFSGESTLQRKFELPGTGRVDYVRLQLAFSSFDLRRANRIMLLMQTEAERSYYLLLAITSDGYLQLEEDRDNGQTVGARIDRNFLNSARHSVYYVRNGTQSQLFIDREQVPLSEFAARVLTTGGDAGSNRVQIGGINSTDSRFAVFKSYSGCLSNIYIQVNGHVMKPLEEYMLFTKSGADNITVINPQGVRSAQCNAKFDVSEQPTQEPMVNVSMIPEPWVEEPPARVPYIPRFVYDENKQEDSTQVVFLTLTSVFVIIVICCLLEVYRSHLAYKKRIERETDEDIIWSKEQATKMHESPGVKAGLLGGVTAGSGNGLPPYTYKALPQEDKKPGNGAPLVGILKNGSATPSQPGTPTALSKNGDIASRIEEEEEEEDEAPAQKAAEKSGENEEPPAKDTTASEIKESQAQPPEQLAKDTTDASAAPKASKETEAQAEPSEPSSQLNSAQNGQLAQMEQAARGDEVQVPSLPHPIQPPDAIFMPNLPQKAQQRQPQEHKSRHKATDDTEAPKQQQQQQQQQQSFDVATNANGSSLPASRVKNPEEPGGKSPLVPMRQHHSKVTRPPPPPTLFLENSLLQRQFANPISYLGGPRLQPRSNRTSIDSILSLD.

An N-terminal signal peptide occupies residues 1-18 (MAFPYIWALLPLICSASG). The Extracellular portion of the chain corresponds to 19 to 1816 (LSLPNMTSTD…DENKQEDSTQ (1798 aa)). N-linked (GlcNAc...) asparagine glycosylation is found at Asn23 and Asn52. The disordered stretch occupies residues 59-107 (GGLAGSSTGGQSLPDTGGGNSAGGSPAGGSSGTGGGGSNSGISGNNSAM). The segment covering 74 to 97 (TGGGNSAGGSPAGGSSGTGGGGSN) has biased composition (gly residues). Asn103 carries N-linked (GlcNAc...) asparagine glycosylation. One can recognise a BPTI/Kunitz inhibitor domain in the interval 119–170 (CAGPGDPGPCKQYIYKWRYEPTTNECTNFIWGGCEGNPQNRFGTEAECLFHC). 3 disulfides stabilise this stretch: Cys119–Cys170, Cys128–Cys152, and Cys144–Cys166. A disordered region spans residues 201 to 220 (YTQSPAQSPDGMGGAEGGDG). Over residues 211 to 220 (GMGGAEGGDG) the composition is skewed to gly residues. The Laminin G-like 1 domain maps to 242-438 (KTFIFAKNNT…TKHENVNEGC (197 aa)). Residue Asn249 is glycosylated (N-linked (GlcNAc...) asparagine). 4 cysteine pairs are disulfide-bonded: Cys405–Cys438, Cys442–Cys455, Cys449–Cys464, and Cys466–Cys476. Residues 439 to 477 (SDMCESRHNLCFVGSRCINHYGGISCDCFGTHYEGEHCD) enclose the EGF-like 1 domain. Laminin G-like domains follow at residues 481 to 664 (ATII…AEFV) and 660 to 839 (EAEF…LDNC). Residues Asn542, Asn571, and Asn741 are each glycosylated (N-linked (GlcNAc...) asparagine). Intrachain disulfides connect Cys808–Cys839, Cys845–Cys857, Cys851–Cys866, and Cys868–Cys878. An EGF-like 2 domain is found at 841–879 (YIDPCKRPNTCEHGGKCFVKDDRVTCDCKHTGYIGKNCH). N-linked (GlcNAc...) asparagine glycans are attached at residues Asn925, Asn1000, Asn1019, and Asn1026. Residues 1087-1259 (YVVTFTTSQS…VHLSEIIKDC (173 aa)) form the Laminin G-like 4 domain. Cystine bridges form between Cys1231–Cys1259, Cys1263–Cys1274, Cys1268–Cys1283, and Cys1285–Cys1296. The EGF-like 3 domain occupies 1260 to 1297 (KPSCVPSPCRNGAQCKELWSSFKCVCNNPWAHIGEFCE). The Laminin G-like 5 domain maps to 1316 to 1526 (RNYLSVGATP…PTQEGVLPNC (211 aa)). Asn1393 carries N-linked (GlcNAc...) asparagine glycosylation. Cystine bridges form between Cys1494–Cys1526, Cys1530–Cys1541, Cys1535–Cys1552, and Cys1554–Cys1564. The EGF-like 4 domain maps to 1527–1565 (QIKCDAEPCKNGGTCQEHFAEQLSTCDCEHTSFLGEFCS). The 197-residue stretch at 1569–1765 (GADFSGESTL…NPQGVRSAQC (197 aa)) folds into the Laminin G-like 6 domain. Asn1667, Asn1707, Asn1751, and Asn1782 each carry an N-linked (GlcNAc...) asparagine glycan. A disulfide bridge links Cys1722 with Cys1765. Residues 1817–1837 (VVFLTLTSVFVIIVICCLLEV) traverse the membrane as a helical segment. Over 1838 to 2179 (YRSHLAYKKR…TSIDSILSLD (342 aa)) the chain is Cytoplasmic. Disordered stretches follow at residues 1891 to 2141 (YTYK…PTLF) and 2156 to 2179 (SYLGGPRLQPRSNRTSIDSILSLD). Over residues 1916–1930 (GSATPSQPGTPTALS) the composition is skewed to polar residues. Positions 1940–1949 (EEEEEEEDEA) are enriched in acidic residues. Basic and acidic residues predominate over residues 1954–1966 (AAEKSGENEEPPA). Composition is skewed to polar residues over residues 1969 to 1981 (TTASEIKESQAQP) and 2010 to 2025 (EPSSQLNSAQNGQLAQ). The segment covering 2064–2079 (PQEHKSRHKATDDTEA) has biased composition (basic and acidic residues). The segment covering 2082 to 2091 (QQQQQQQQQQ) has biased composition (low complexity). 2 stretches are compositionally biased toward polar residues: residues 2092–2105 (SFDVATNANGSSLP) and 2165–2179 (PRSNRTSIDSILSLD).

The protein localises to the cell projection. The protein resides in the axon. It localises to the membrane. Functionally, may have serine protease inhibitor activity. Might play a role in the glial-neuronal signaling pathway that is important in establishing the electrical properties of axonal membranes. The chain is Axotactin from Drosophila melanogaster (Fruit fly).